We begin with the raw amino-acid sequence, 88 residues long: Cell division topological specificity factor (88 aa).

Belongs to the MinE family.

In terms of biological role, prevents the cell division inhibition by proteins MinC and MinD at internal division sites while permitting inhibition at polar sites. This ensures cell division at the proper site by restricting the formation of a division septum at the midpoint of the long axis of the cell. This chain is Cell division topological specificity factor, found in Paracidovorax citrulli (strain AAC00-1) (Acidovorax citrulli).